A 593-amino-acid polypeptide reads, in one-letter code: SPI-1 type 3 secretion system translocon protein SctE (593 aa).

Coiled coils occupy residues D151–A208 and E287–M314. 2 helical membrane passes run V330 to V350 and I409 to V429.

The protein belongs to the SctE/SipB/YopB family. In terms of assembly, the core secretion machinery of the T3SS is composed of approximately 20 different proteins, including cytoplasmic components, a base, an export apparatus and a needle. This subunit is involved in the formation of a pore, called the translocon, in host membrane.

It localises to the secreted. The protein localises to the host membrane. It is found in the host cell. Functionally, component of the type III secretion system 1 (SPI-1 T3SS), also called injectisome, which is used to inject bacterial effector proteins into eukaryotic host cells. SipB/SctE1 and SipC/SctB are inserted into the host membrane where they form a pore and allow the translocation of effector proteins into the cytosol of target cells. In terms of biological role, induces macrophage apoptosis either by binding and activating the proapoptotic enzyme caspase-1 (caspase-1 dependent), resulting in the release of interleukin-1 beta active form, or by disrupting mitochondria and inducing autophagy (caspase-1 independent). The former is dependent of its membrane-fusion activity. The sequence is that of SPI-1 type 3 secretion system translocon protein SctE from Salmonella typhi.